The primary structure comprises 427 residues: UDP-N-acetylglucosamine 1-carboxyvinyltransferase (427 aa).

22–23 (KN) contacts phosphoenolpyruvate. UDP-N-acetyl-alpha-D-glucosamine is bound at residue Arg92. Asp116 serves as the catalytic Proton donor. UDP-N-acetyl-alpha-D-glucosamine is bound by residues Asp312 and Met334.

This sequence belongs to the EPSP synthase family. MurA subfamily.

Its subcellular location is the cytoplasm. It carries out the reaction phosphoenolpyruvate + UDP-N-acetyl-alpha-D-glucosamine = UDP-N-acetyl-3-O-(1-carboxyvinyl)-alpha-D-glucosamine + phosphate. It participates in cell wall biogenesis; peptidoglycan biosynthesis. Functionally, cell wall formation. Adds enolpyruvyl to UDP-N-acetylglucosamine. The sequence is that of UDP-N-acetylglucosamine 1-carboxyvinyltransferase from Borreliella burgdorferi (strain ATCC 35210 / DSM 4680 / CIP 102532 / B31) (Borrelia burgdorferi).